The sequence spans 257 residues: 3-methyl-2-oxobutanoate hydroxymethyltransferase (257 aa).

2 residues coordinate Mg(2+): aspartate 44 and aspartate 83. 3-methyl-2-oxobutanoate contacts are provided by residues 44 to 45, aspartate 83, and lysine 113; that span reads DS. A Mg(2+)-binding site is contributed by glutamate 115. Glutamate 182 serves as the catalytic Proton acceptor.

This sequence belongs to the PanB family. In terms of assembly, homodecamer; pentamer of dimers. The cofactor is Mg(2+).

Its subcellular location is the cytoplasm. The enzyme catalyses 3-methyl-2-oxobutanoate + (6R)-5,10-methylene-5,6,7,8-tetrahydrofolate + H2O = 2-dehydropantoate + (6S)-5,6,7,8-tetrahydrofolate. It functions in the pathway cofactor biosynthesis; (R)-pantothenate biosynthesis; (R)-pantoate from 3-methyl-2-oxobutanoate: step 1/2. Functionally, catalyzes the reversible reaction in which hydroxymethyl group from 5,10-methylenetetrahydrofolate is transferred onto alpha-ketoisovalerate to form ketopantoate. This chain is 3-methyl-2-oxobutanoate hydroxymethyltransferase, found in Rippkaea orientalis (strain PCC 8801 / RF-1) (Cyanothece sp. (strain PCC 8801)).